Here is a 629-residue protein sequence, read N- to C-terminus: Forkhead box protein O1-B (629 aa).

Disordered stretches follow at residues 1 to 54, 88 to 134, 211 to 308, and 359 to 397; these read MAEP…PEQG, CAHP…SRRN, SWWM…SPFL, and KNNT…QPQV. Polar residues predominate over residues 36-46; sequence QPGNSNTSSPA. Composition is skewed to low complexity over residues 90 to 107 and 115 to 133; these read HPQQ…THPQ and PASG…SSRR. Residues 136-230 constitute a DNA-binding region (fork-head); it reads WGNMSYADLI…KSGKSPRRRA (95 aa). Residues 240–251 are compositionally biased toward basic residues; that stretch reads TKSRGRAAKKKM. Polar residues-rich tracts occupy residues 291–302, 359–377, and 385–397; these read TRASSDASTLSG, KNNT…SPLM, and SYTS…QPQV.

It localises to the cytoplasm. The protein localises to the nucleus. In terms of biological role, transcription factor that regulates metabolic homeostasis in response to oxidative stress. Binds to the consensus sequence 5'-TT[G/A]TTTTG-3' and the related Daf-16 family binding element (DBE) with consensus sequence 5'-TT[G/A]TTTAC-3'. Main regulator of redox balance and osteoblast numbers and controls bone mass. Orchestrates the endocrine function of the skeleton in regulating glucose metabolism. May act as a positive regulator of apoptosis in cardiac smooth muscle cells as a result of its transcriptional activation of pro-apoptotic genes. In Danio rerio (Zebrafish), this protein is Forkhead box protein O1-B (foxo1b).